A 314-amino-acid chain; its full sequence is Protein REGULATOR OF FATTY ACID COMPOSITION 3, chloroplastic (314 aa).

A chloroplast-targeting transit peptide spans 1 to 47 (MESLLHASSSLVSLRPRIDGRDSFINPSRVCLNPSLGRRGSKPLPLV). Disordered stretches follow at residues 49–73 (AAKKKKSKKDDNHNFSARPDEATGP) and 214–314 (AITE…NVGG). Residues 56–69 (KKDDNHNFSARPDE) are compositionally biased toward basic and acidic residues. Composition is skewed to acidic residues over residues 233-269 (EYYDDDEEEEIEEDEDEGEGEDEEDADNIEYEVDDDG) and 277-294 (GDEEEGEEEEDGASEQEE). A compositionally biased stretch (basic and acidic residues) spans 295 to 308 (GQDKSTNGRRETRR).

Belongs to the bacterial ribosomal protein bS6 family. As to quaternary structure, interacts with CFM3B/SPRT2 in plastids. As to expression, expressed ubiquitously in roots, leaves, stems, flower buds, flowers and siliques.

It is found in the plastid. The protein resides in the chloroplast. Prevents non-specific action of the splicing factor CFM3b during plastid rRNA biogenesis to improve the accuracy of plastid rRNA processing. Required for plastid functions such as photosynthesis, intracellular distribution, plastid rRNAs biosynthesis and plastid gene expression in roots. Involved in a sucrose-conditional process important for the organization of root lateral and apical meristems (e.g. establishment of RAM from pericycle and symplasmic connectivity), and subsequent primary and lateral roots development. Modulates C18 unsaturated fatty acid metabolism. This chain is Protein REGULATOR OF FATTY ACID COMPOSITION 3, chloroplastic, found in Arabidopsis thaliana (Mouse-ear cress).